Reading from the N-terminus, the 935-residue chain is C-1-tetrahydrofolate synthase, cytoplasmic (935 aa).

Residue Met1 is modified to N-acetylmethionine. Residues 2–291 are methylenetetrahydrofolate dehydrogenase and methenyltetrahydrofolate cyclohydrolase (D/C) domain; the sequence is APAGILNGKL…MLMQSTVESA (290 aa). Substrate is bound by residues 52 to 56 and 99 to 101; these read YINVK and VQL. Residue Lys56 is part of the active site. NADP(+) is bound by residues 172 to 174 and Ser197; that span reads GRS. 272 to 276 contacts substrate; it reads PGGVG. Residues 310–935 are formyltetrahydrofolate synthetase domain; sequence LNLKTPVPSD…PETEQVNGLF (626 aa). Ser318 is subject to Phosphoserine. Residue 380–387 participates in ATP binding; it reads TPLGEGKS. Phosphoserine occurs at positions 413 and 490.

The protein in the N-terminal section; belongs to the tetrahydrofolate dehydrogenase/cyclohydrolase family. This sequence in the C-terminal section; belongs to the formate--tetrahydrofolate ligase family. As to quaternary structure, homodimer.

Its subcellular location is the cytoplasm. The enzyme catalyses (6R)-5,10-methylene-5,6,7,8-tetrahydrofolate + NADP(+) = (6R)-5,10-methenyltetrahydrofolate + NADPH. The catalysed reaction is (6R)-5,10-methenyltetrahydrofolate + H2O = (6R)-10-formyltetrahydrofolate + H(+). It carries out the reaction (6S)-5,6,7,8-tetrahydrofolate + formate + ATP = (6R)-10-formyltetrahydrofolate + ADP + phosphate. Its pathway is one-carbon metabolism; tetrahydrofolate interconversion. In terms of biological role, trifunctional enzyme that catalyzes the interconversion of three forms of one-carbon-substituted tetrahydrofolate: (6R)-5,10-methylene-5,6,7,8-tetrahydrofolate, 5,10-methenyltetrahydrofolate and (6S)-10-formyltetrahydrofolate. These derivatives of tetrahydrofolate are differentially required in nucleotide and amino acid biosynthesis, (6S)-10-formyltetrahydrofolate being required for purine biosynthesis while (6R)-5,10-methylene-5,6,7,8-tetrahydrofolate is used for serine and methionine biosynthesis for instance. The polypeptide is C-1-tetrahydrofolate synthase, cytoplasmic (Mthfd1) (Mus musculus (Mouse)).